Reading from the N-terminus, the 134-residue chain is ATP synthase epsilon chain (134 aa).

It belongs to the ATPase epsilon chain family. In terms of assembly, F-type ATPases have 2 components, CF(1) - the catalytic core - and CF(0) - the membrane proton channel. CF(1) has five subunits: alpha(3), beta(3), gamma(1), delta(1), epsilon(1). CF(0) has three main subunits: a, b and c.

It localises to the cell membrane. Functionally, produces ATP from ADP in the presence of a proton gradient across the membrane. This Listeria monocytogenes serotype 4a (strain HCC23) protein is ATP synthase epsilon chain.